A 227-amino-acid polypeptide reads, in one-letter code: Cytidylate kinase (227 aa).

7–15 (GPAGSGKST) contacts ATP.

This sequence belongs to the cytidylate kinase family. Type 1 subfamily.

It is found in the cytoplasm. It catalyses the reaction CMP + ATP = CDP + ADP. The catalysed reaction is dCMP + ATP = dCDP + ADP. This chain is Cytidylate kinase, found in Salinibacter ruber (strain DSM 13855 / M31).